The primary structure comprises 293 residues: Small ribosomal subunit protein uS5 (293 aa).

A disordered region spans residues Met-1–Glu-56. The residue at position 2 (Ala-2) is an N-acetylalanine. A compositionally biased stretch (gly residues) spans Ala-7–Arg-34. Basic residues predominate over residues Gly-35 to Arg-51. Glycyl lysine isopeptide (Lys-Gly) (interchain with G-Cter in ubiquitin) cross-links involve residues Lys-54 and Lys-58. The region spanning Leu-102–Val-165 is the S5 DRBM domain. At Thr-252 the chain carries Phosphothreonine. Lys-263 bears the N6-acetyllysine mark. Residue Ser-264 is modified to Phosphoserine. Thr-270 is modified (phosphothreonine). Lys-275 carries the N6-acetyllysine; alternate modification. A Glycyl lysine isopeptide (Lys-Gly) (interchain with G-Cter in SUMO1); alternate cross-link involves residue Lys-275. Lys-275 is covalently cross-linked (Glycyl lysine isopeptide (Lys-Gly) (interchain with G-Cter in SUMO2); alternate). A Glycyl lysine isopeptide (Lys-Gly) (interchain with G-Cter in ubiquitin); alternate cross-link involves residue Lys-275. The residue at position 281 (Ser-281) is a Phosphoserine.

This sequence belongs to the universal ribosomal protein uS5 family. As to quaternary structure, component of the small ribosomal subunit. Interacts with zinc finger protein ZNF277 (via zinc-finger domains); the interaction is direct; the interaction is extra-ribosomal. Interaction with ZNF277 competes with the binding of RPS2 to protein arginine methyltransferase PRMT3. Post-translationally, citrullinated by PADI4 in the Arg/Gly-rich region. Asymmetric arginine dimethylation by PRMT3 occurs at multiple sites in the Arg/Gly-rich region. In terms of processing, monoubiquitinated at Lys-54 and Lys-58 by RNF10 when a ribosome has stalled during translation, leading to its degradation by the proteasome. Deubiquitinated at Lys-54 and Lys-58 by USP10, preventing degradation by the proteasome and promoting 40S ribosome subunit recycling following ribosome dissociation.

It localises to the cytoplasm. Its subcellular location is the nucleus. The protein resides in the nucleolus. Component of the ribosome, a large ribonucleoprotein complex responsible for the synthesis of proteins in the cell. The small ribosomal subunit (SSU) binds messenger RNAs (mRNAs) and translates the encoded message by selecting cognate aminoacyl-transfer RNA (tRNA) molecules. The large subunit (LSU) contains the ribosomal catalytic site termed the peptidyl transferase center (PTC), which catalyzes the formation of peptide bonds, thereby polymerizing the amino acids delivered by tRNAs into a polypeptide chain. The nascent polypeptides leave the ribosome through a tunnel in the LSU and interact with protein factors that function in enzymatic processing, targeting, and the membrane insertion of nascent chains at the exit of the ribosomal tunnel. Plays a role in the assembly and function of the 40S ribosomal subunit. Mutations in this protein affects the control of translational fidelity. Involved in nucleolar processing of pre-18S ribosomal RNA and ribosome assembly. This chain is Small ribosomal subunit protein uS5 (RPS2), found in Bos taurus (Bovine).